The following is a 552-amino-acid chain: Chaperonin GroEL (552 aa).

ATP is bound by residues Thr-30–Pro-33, Lys-51, Asp-87–Thr-91, Gly-415, Asn-480–Ala-482, and Asp-496.

This sequence belongs to the chaperonin (HSP60) family. As to quaternary structure, forms a cylinder of 14 subunits composed of two heptameric rings stacked back-to-back. Interacts with the co-chaperonin GroES.

It localises to the cytoplasm. The catalysed reaction is ATP + H2O + a folded polypeptide = ADP + phosphate + an unfolded polypeptide.. Functionally, together with its co-chaperonin GroES, plays an essential role in assisting protein folding. The GroEL-GroES system forms a nano-cage that allows encapsulation of the non-native substrate proteins and provides a physical environment optimized to promote and accelerate protein folding. The sequence is that of Chaperonin GroEL from Verminephrobacter eiseniae (strain EF01-2).